The chain runs to 93 residues: uncharacterized protein (93 aa).

It to B.subtilis YdcN C-terminal region.

This is an uncharacterized protein from Methanocaldococcus jannaschii (strain ATCC 43067 / DSM 2661 / JAL-1 / JCM 10045 / NBRC 100440) (Methanococcus jannaschii).